The chain runs to 1320 residues: CAP-Gly domain-containing linker protein 1 (1320 aa).

A disordered region spans residues 1-53 (MSMLKPSGLKAPTKILKPGSTALKTPAAAAAPLEKTVPSEKASGPPSSETQEE). Residues 21–35 (TALKTPAAAAAPLEK) are compositionally biased toward low complexity. Serine 48 carries the phosphoserine modification. The residue at position 50 (threonine 50) is a Phosphothreonine. Positions 78 to 120 (GETQFAPGQWAGIVLDEPIGKNDGSVAGVRYFQCEPLKGIFTR) constitute a CAP-Gly 1 domain. An important for tubulin binding region spans residues 97–101 (GKNDG). Position 146 is a phosphoserine (serine 146). A compositionally biased stretch (polar residues) spans 156 to 171 (VSSSPATPSNIPQKPS). The tract at residues 156–181 (VSSSPATPSNIPQKPSQPVAKETSAT) is disordered. Threonine 181 carries the post-translational modification Phosphothreonine. A phosphoserine mark is found at serine 194, serine 196, serine 199, and serine 203. The CAP-Gly 2 domain occupies 231-273 (GETDFAKGEWCGVELDEPLGKNDGAVAGTRYFQCQPKYGLFAP). Positions 301–331 (TTPASLKRSPSASSLSSMSSVASSVSSKPSR) are enriched in low complexity. Residues 301-338 (TTPASLKRSPSASSLSSMSSVASSVSSKPSRTGLLTET) form a disordered region. A Phosphoserine modification is found at serine 309. Serine 311 is modified (phosphoserine; by PKA). Residues serine 314 and serine 347 each carry the phosphoserine modification. The interval 1089-1109 (SLPSNTLRESEYRKDADEEKA) is disordered. A compositionally biased stretch (basic and acidic residues) spans 1096 to 1109 (RESEYRKDADEEKA). Serine 1116 is subject to Phosphoserine. Positions 1178-1201 (KRQLSSSSGNTDVQTEEDERAQES) are disordered. Polar residues predominate over residues 1180–1190 (QLSSSSGNTDV). Serine 1246 bears the Phosphoserine mark. The CCHC-type zinc-finger motif lies at 1299 to 1316 (PYCEICEMFGHWATNCND).

As to quaternary structure, interacts with MTOR; phosphorylates and regulates CLIP1. Interacts (via CAP-Gly domains) with tubulin and TUBA1B. Interacts with SLAIN2. Interacts with MAPRE1 and MAPRE3. Interacts (via zinc finger) with DCTN1. Binds preferentially to tyrosinated microtubules, and only marginally to detyrosinated microtubules. In terms of processing, phosphorylated. Phosphorylation induces conformational changes by increasing the affinity of the N-terminus for C-terminus, resulting in inhibition of its function thus decreasing its binding to microtubules and DCTN1. Exhibits a folded, autoinhibited conformation when phosphorylated and an open conformation when dephosphorylated with increased binding affinity to microtubules and DCTN1. Phosphorylation regulates its recruitment to tyrosinated microtubules and the recruitment of vesicular cargo to microtubules in neurons. Phosphorylation by MTOR may positively regulate CLIP1 association with microtubules.

It localises to the cytoplasm. The protein localises to the cytoskeleton. The protein resides in the cytoplasmic vesicle membrane. Its subcellular location is the cell projection. It is found in the ruffle. Binds to the plus end of microtubules and regulates the dynamics of the microtubule cytoskeleton. Promotes microtubule growth and microtubule bundling. Links cytoplasmic vesicles to microtubules and thereby plays an important role in intracellular vesicle trafficking. Plays a role macropinocytosis and endosome trafficking. The protein is CAP-Gly domain-containing linker protein 1 (Clip1) of Rattus norvegicus (Rat).